Reading from the N-terminus, the 470-residue chain is Alpha-1A adrenergic receptor (470 aa).

Over 1-27 the chain is Extracellular; it reads MTPSSVTLNCSNCSHVLAPELNTVKAV. Residues Asn-9 and Asn-12 are each glycosylated (N-linked (GlcNAc...) asparagine). A helical transmembrane segment spans residues 28–51; it reads VLGMVLGIFILFGVIGNILVILSV. Residues 52–64 lie on the Cytoplasmic side of the membrane; that stretch reads VCHRHLQTVTYYF. A helical membrane pass occupies residues 65–88; that stretch reads IVNLAVADLLLSSTVLPFSAIFEI. Over 89 to 99 the chain is Extracellular; sequence LDRWVFGRVFC. A disulfide bridge links Cys-99 with Cys-176. The helical transmembrane segment at 100–122 threads the bilayer; it reads NIWAAVDVLCCTASIMSLCVISV. Topologically, residues 123–143 are cytoplasmic; that stretch reads DRYIGVSYPLRYPAIMTKRRA. Residues 144 to 167 form a helical membrane-spanning segment; sequence LLAVMLLWVLSVIISIGPLFGWKE. Residues 168–181 lie on the Extracellular side of the membrane; that stretch reads PAPEDETVCKITEE. The chain crosses the membrane as a helical span at residues 182 to 205; that stretch reads PGYAIFSAVGSFYLPLAIILAMYC. Residues 206–271 are Cytoplasmic-facing; the sequence is RVYVVAQKES…FSREKKAAKT (66 aa). The helical transmembrane segment at 272 to 295 threads the bilayer; the sequence is LGIVVGCFVLCWLPFFLVLPIGSI. Over 296 to 303 the chain is Extracellular; it reads FPAYRPSD. The chain crosses the membrane as a helical span at residues 304–327; sequence TVFKITFWLGYFNSCINPIIYLCS. Residues 328-470 lie on the Cytoplasmic side of the membrane; the sequence is NQEFKKAFQS…LSLSEKGESV (143 aa). The S-palmitoyl cysteine moiety is linked to residue Cys-343. Positions 375–416 are disordered; the sequence is GAPCRLSPSSSVALSRTPSSRDSREWRVFSGGPINSGPGPTE. Over residues 381-392 the composition is skewed to polar residues; that stretch reads SPSSSVALSRTP.

Belongs to the G-protein coupled receptor 1 family. Adrenergic receptor subfamily. ADRA1A sub-subfamily.

Its subcellular location is the cell membrane. In terms of biological role, this alpha-adrenergic receptor mediates its action by association with G proteins that activate a phosphatidylinositol-calcium second messenger system. This is Alpha-1A adrenergic receptor (adra1a) from Oryzias latipes (Japanese rice fish).